Reading from the N-terminus, the 541-residue chain is Chaperonin GroEL 2 (541 aa).

ATP-binding positions include 30–33, lysine 51, 87–91, glycine 415, and aspartate 496; these read TLGP and DGTTT.

It belongs to the chaperonin (HSP60) family. Forms a cylinder of 14 subunits composed of two heptameric rings stacked back-to-back. Interacts with the co-chaperonin GroES.

It is found in the cytoplasm. The catalysed reaction is ATP + H2O + a folded polypeptide = ADP + phosphate + an unfolded polypeptide.. In terms of biological role, together with its co-chaperonin GroES, plays an essential role in assisting protein folding. The GroEL-GroES system forms a nano-cage that allows encapsulation of the non-native substrate proteins and provides a physical environment optimized to promote and accelerate protein folding. The chain is Chaperonin GroEL 2 from Bradyrhizobium sp. (strain BTAi1 / ATCC BAA-1182).